A 131-amino-acid polypeptide reads, in one-letter code: MPTINQLVRNERKKVTVKSKSPALKECPQRRGVCTRVYTTTPKKPNSALRKVAKVRLTSGFEVISYIGGEGHNLQEHSIVLVRGGRVKDLPGVKYHIVRGALDTAGVAKRTVSRSKYGAKRPKAGAAAPKK.

The residue at position 89 (aspartate 89) is a 3-methylthioaspartic acid.

It belongs to the universal ribosomal protein uS12 family. Part of the 30S ribosomal subunit. Contacts proteins S8 and S17. May interact with IF1 in the 30S initiation complex.

In terms of biological role, with S4 and S5 plays an important role in translational accuracy. Its function is as follows. Interacts with and stabilizes bases of the 16S rRNA that are involved in tRNA selection in the A site and with the mRNA backbone. Located at the interface of the 30S and 50S subunits, it traverses the body of the 30S subunit contacting proteins on the other side and probably holding the rRNA structure together. The combined cluster of proteins S8, S12 and S17 appears to hold together the shoulder and platform of the 30S subunit. This chain is Small ribosomal subunit protein uS12, found in Campylobacter concisus (strain 13826).